The chain runs to 372 residues: Glutamate 5-kinase (372 aa).

Lysine 14 serves as a coordination point for ATP. Residues serine 54, aspartate 141, and asparagine 153 each contribute to the substrate site. Residues 173–174 (TD) and 215–221 (TGGMATK) each bind ATP. The region spanning 280 to 358 (KGKLVLDVGA…DEIESLLGYD (79 aa)) is the PUA domain.

This sequence belongs to the glutamate 5-kinase family.

It localises to the cytoplasm. It carries out the reaction L-glutamate + ATP = L-glutamyl 5-phosphate + ADP. It functions in the pathway amino-acid biosynthesis; L-proline biosynthesis; L-glutamate 5-semialdehyde from L-glutamate: step 1/2. Functionally, catalyzes the transfer of a phosphate group to glutamate to form L-glutamate 5-phosphate. The sequence is that of Glutamate 5-kinase from Shewanella woodyi (strain ATCC 51908 / MS32).